A 223-amino-acid chain; its full sequence is Adenylate kinase (223 aa).

Position 10-15 (10-15) interacts with ATP; sequence GSGKGT. The interval 30–59 is NMP; that stretch reads ESGAIFREHIGGGTELGKKAKAYIDRGDLV. AMP is bound by residues serine 31, arginine 36, 57-59, 84-87, and glutamine 91; these read DLV and GFPR. The tract at residues 125 to 164 is LID; that stretch reads GRRLCKNNNNHPNNIFIEAIKPNGDVCRVCGGTLSSRSDD. ATP is bound at residue arginine 126. Positions 161 and 173 each coordinate AMP. ATP is bound at residue glycine 209.

The protein belongs to the adenylate kinase family. In terms of assembly, monomer.

The protein resides in the cytoplasm. It carries out the reaction AMP + ATP = 2 ADP. It participates in purine metabolism; AMP biosynthesis via salvage pathway; AMP from ADP: step 1/1. Functionally, catalyzes the reversible transfer of the terminal phosphate group between ATP and AMP. Plays an important role in cellular energy homeostasis and in adenine nucleotide metabolism. The chain is Adenylate kinase from Desulfovibrio desulfuricans (strain ATCC 27774 / DSM 6949 / MB).